The sequence spans 675 residues: Parasporal crystal protein Cry18Ba (675 aa).

This sequence belongs to the delta endotoxin family.

In terms of biological role, binds to the brush border membrane vesicles of scarab larvae and damages the gut wall somehow to allow the vegetative cells of P.popilliae to enter the hemolymph. This Paenibacillus popilliae (Bacillus popilliae) protein is Parasporal crystal protein Cry18Ba (cry18Ba).